The primary structure comprises 258 residues: UPF0246 protein YaaA (258 aa).

The protein belongs to the UPF0246 family.

The protein is UPF0246 protein YaaA of Escherichia coli (strain 55989 / EAEC).